A 108-amino-acid chain; its full sequence is Parvalbumin beta (108 aa).

2 EF-hand domains span residues 38-73 (KPTDQVKKVFDILDQDKSGYIEEDELQLFLKNFCSS) and 77-108 (LSNAETKAFLFAGDSDGDGKIGVDEFQALVRS). Aspartate 51, aspartate 53, serine 55, tyrosine 57, glutamate 59, glutamate 62, aspartate 90, aspartate 92, aspartate 94, lysine 96, and glutamate 101 together coordinate Ca(2+).

This sequence belongs to the parvalbumin family.

In muscle, parvalbumin is thought to be involved in relaxation after contraction. It binds two calcium ions. The polypeptide is Parvalbumin beta (Amphiuma means (Salamander)).